We begin with the raw amino-acid sequence, 429 residues long: S-adenosylmethionine synthase (429 aa).

E9 provides a ligand contact to Mg(2+). H15 is a binding site for ATP. Residue E43 participates in K(+) binding. Residues E56 and Q99 each coordinate L-methionine. ATP contacts are provided by residues 167 to 169, 235 to 238, D246, 252 to 253, A269, K273, and K277; these read DGK, SGRF, and RK. Residue D246 participates in L-methionine binding. K277 contacts L-methionine.

It belongs to the AdoMet synthase family. Homotetramer. Requires Mn(2+) as cofactor. The cofactor is Mg(2+). It depends on Co(2+) as a cofactor. K(+) serves as cofactor.

Its subcellular location is the cytoplasm. It catalyses the reaction L-methionine + ATP + H2O = S-adenosyl-L-methionine + phosphate + diphosphate. The protein operates within amino-acid biosynthesis; S-adenosyl-L-methionine biosynthesis; S-adenosyl-L-methionine from L-methionine: step 1/1. Its function is as follows. Catalyzes the formation of S-adenosylmethionine from methionine and ATP. The reaction comprises two steps that are both catalyzed by the same enzyme: formation of S-adenosylmethionine (AdoMet) and triphosphate, and subsequent hydrolysis of the triphosphate. The chain is S-adenosylmethionine synthase (SAMS) from Carica papaya (Papaya).